The sequence spans 450 residues: uncharacterized protein (450 aa).

Positions 1–58 (MAKGEIVTVKIEEMDFKGYGVGYCEGKPLKVRGGILGQRVAVRVKKGKKGRAEGEIVE) constitute a TRAM domain. [4Fe-4S] cluster-binding residues include Cys-71, Cys-77, Cys-80, and Cys-159. Gln-285, Tyr-314, Glu-335, and Asp-380 together coordinate S-adenosyl-L-methionine. Cys-407 functions as the Nucleophile in the catalytic mechanism.

The protein belongs to the class I-like SAM-binding methyltransferase superfamily. RNA M5U methyltransferase family.

This is an uncharacterized protein from Caldanaerobacter subterraneus subsp. tengcongensis (strain DSM 15242 / JCM 11007 / NBRC 100824 / MB4) (Thermoanaerobacter tengcongensis).